We begin with the raw amino-acid sequence, 406 residues long: Tryptophan 2,3-dioxygenase A (406 aa).

Substrate is bound by residues phenylalanine 71–histidine 75 and arginine 143. Histidine 327 contacts heme. Position 341 (threonine 341) interacts with substrate.

Belongs to the tryptophan 2,3-dioxygenase family. As to quaternary structure, homotetramer. Dimer of dimers. Heme serves as cofactor.

It catalyses the reaction L-tryptophan + O2 = N-formyl-L-kynurenine. Its pathway is amino-acid degradation; L-tryptophan degradation via kynurenine pathway; L-kynurenine from L-tryptophan: step 1/2. Its function is as follows. Heme-dependent dioxygenase that catalyzes the oxidative cleavage of the L-tryptophan (L-Trp) pyrrole ring and converts L-tryptophan to N-formyl-L-kynurenine. Catalyzes the oxidative cleavage of the indole moiety. The sequence is that of Tryptophan 2,3-dioxygenase A from Danio rerio (Zebrafish).